The following is a 70-amino-acid chain: U-actitoxin-Avd11a (70 aa).

The region spanning 36-70 (CNDYKSSSYCRSVGSRNECGIHKYRMYCRKTCGSC) is the ShKT domain. 3 cysteine pairs are disulfide-bonded: Cys-36-Cys-70, Cys-45-Cys-63, and Cys-54-Cys-67. A crucial for binding to potassium channels region spans residues 58-59 (KY).

Belongs to the sea anemone type 1 potassium channel toxin family. Type 1b subfamily.

It localises to the secreted. The protein localises to the nematocyst. In terms of biological role, inhibits voltage-gated potassium channels (Kv1/KCNA). The polypeptide is U-actitoxin-Avd11a (Anemonia viridis (Snakelocks anemone)).